The following is a 559-amino-acid chain: 2,3-bisphosphoglycerate-independent phosphoglycerate mutase (559 aa).

Positions 28 and 81 each coordinate Mn(2+). The active-site Phosphoserine intermediate is Ser-81. Residues His-140, 170–171, Arg-206, Arg-213, 286–289, and Lys-361 each bind substrate; these read RD and RADR. Residues Asp-430, His-434, Asp-471, His-472, and His-501 each contribute to the Mn(2+) site.

Belongs to the BPG-independent phosphoglycerate mutase family. In terms of assembly, monomer. It depends on Mn(2+) as a cofactor.

The protein resides in the cytoplasm. It catalyses the reaction (2R)-2-phosphoglycerate = (2R)-3-phosphoglycerate. The protein operates within carbohydrate degradation; glycolysis; pyruvate from D-glyceraldehyde 3-phosphate: step 3/5. Its function is as follows. Catalyzes the interconversion of 2-phosphoglycerate and 3-phosphoglycerate. The chain is 2,3-bisphosphoglycerate-independent phosphoglycerate mutase (PGM1) from Mesembryanthemum crystallinum (Common ice plant).